A 144-amino-acid chain; its full sequence is HTH-type transcriptional regulator BilQ (144 aa).

The 134-residue stretch at 1–134 folds into the HTH marR-type domain; that stretch reads MEQTFAYYTT…LFTLLQKLGK (134 aa). The H-T-H motif DNA-binding region spans 48–71; that stretch reads QRELAAAVRADEGYAARSVEKLLQ.

Its function is as follows. Transcription regulator that regulates expression of the bilirubin reductase operon (bilQ, bilR and bilS). In Clostridium symbiosum (strain WAL-14163), this protein is HTH-type transcriptional regulator BilQ.